Consider the following 64-residue polypeptide: Large ribosomal subunit protein bL32 (64 aa).

The protein belongs to the bacterial ribosomal protein bL32 family.

The polypeptide is Large ribosomal subunit protein bL32 (Mycoplasma mobile (strain ATCC 43663 / 163K / NCTC 11711) (Mesomycoplasma mobile)).